The chain runs to 488 residues: Inosine-5'-monophosphate dehydrogenase (488 aa).

2 consecutive CBS domains span residues 95–153 and 157–214; these read VITN…SMKI and MTKE…PNSS. NAD(+)-binding positions include aspartate 251 and 301 to 303; that span reads GIG. 2 residues coordinate K(+): glycine 303 and glycine 305. Residue serine 306 coordinates IMP. K(+) is bound at residue cysteine 308. Cysteine 308 (thioimidate intermediate) is an active-site residue. IMP-binding positions include 341–343, 364–365, and 388–392; these read DGG, GS, and YRGMG. Arginine 404 serves as the catalytic Proton acceptor. Position 416 (glutamate 416) interacts with IMP. The K(+) site is built by glutamate 470, serine 471, and histidine 472.

The protein belongs to the IMPDH/GMPR family. Homotetramer. It depends on K(+) as a cofactor.

The enzyme catalyses IMP + NAD(+) + H2O = XMP + NADH + H(+). Its pathway is purine metabolism; XMP biosynthesis via de novo pathway; XMP from IMP: step 1/1. Its activity is regulated as follows. Mycophenolic acid (MPA) is a non-competitive inhibitor that prevents formation of the closed enzyme conformation by binding to the same site as the amobile flap. In contrast, mizoribine monophosphate (MZP) is a competitive inhibitor that induces the closed conformation. MPA is a potent inhibitor of mammalian IMPDHs but a poor inhibitor of the bacterial enzymes. MZP is a more potent inhibitor of bacterial IMPDH. Functionally, catalyzes the conversion of inosine 5'-phosphate (IMP) to xanthosine 5'-phosphate (XMP), the first committed and rate-limiting step in the de novo synthesis of guanine nucleotides, and therefore plays an important role in the regulation of cell growth. The chain is Inosine-5'-monophosphate dehydrogenase from Bacillus subtilis (strain 168).